We begin with the raw amino-acid sequence, 258 residues long: Lipoprotein-releasing system ATP-binding protein LolD (258 aa).

One can recognise an ABC transporter domain in the interval 5 to 244 (LQCCQLSKSY…PTSSITDPAN (240 aa)). 41 to 48 (GSSGCGKS) provides a ligand contact to ATP. The tract at residues 222–258 (LRPLSDNSEQALPPTSSITDPANNIKDNEPQANERHV) is disordered. The span at 226-243 (SDNSEQALPPTSSITDPA) shows a compositional bias: polar residues. Positions 247–258 (KDNEPQANERHV) are enriched in basic and acidic residues.

The protein belongs to the ABC transporter superfamily. Lipoprotein translocase (TC 3.A.1.125) family. The complex is composed of two ATP-binding proteins (LolD) and two transmembrane proteins (LolC and LolE).

The protein resides in the cell inner membrane. Its function is as follows. Part of the ABC transporter complex LolCDE involved in the translocation of mature outer membrane-directed lipoproteins, from the inner membrane to the periplasmic chaperone, LolA. Responsible for the formation of the LolA-lipoprotein complex in an ATP-dependent manner. The chain is Lipoprotein-releasing system ATP-binding protein LolD from Colwellia psychrerythraea (strain 34H / ATCC BAA-681) (Vibrio psychroerythus).